The sequence spans 134 residues: Retinol-binding protein 2 (134 aa).

Residues K41 and Q109 each contribute to the all-trans-retinol site.

This sequence belongs to the calycin superfamily. Fatty-acid binding protein (FABP) family. In terms of tissue distribution, expressed in prenatal liver, intestine and lung, and in adult intestine.

The protein resides in the cytoplasm. In terms of biological role, intracellular transport of retinol. In Mus musculus (Mouse), this protein is Retinol-binding protein 2 (Rbp2).